The sequence spans 410 residues: Regulator of microtubule dynamics protein 2 (410 aa).

A helical transmembrane segment spans residues 10 to 27; it reads IFGIMVGTAGISLLLLWY. Ser51 is subject to Phosphoserine. A coiled-coil region spans residues 68–110; that stretch reads FQERQLQILEKLNELLTNMEELKEEIRFLKETVPKLEEYIQDE. Residue Ser121 is modified to Phosphoserine. Basic residues predominate over residues 122 to 131; that stretch reads PQHRARKRRL. Positions 122-151 are disordered; sequence PQHRARKRRLPTIQSSATSNSSEEAESEGG. At Thr139 the chain carries Phosphothreonine. A Phosphotyrosine modification is found at Tyr152. Phosphothreonine occurs at positions 154 and 157.

Belongs to the RMDN family. Interacts with microtubules.

It is found in the membrane. The protein resides in the cytoplasm. It localises to the cytoskeleton. The protein localises to the spindle. Its subcellular location is the spindle pole. The polypeptide is Regulator of microtubule dynamics protein 2 (RMDN2) (Macaca fascicularis (Crab-eating macaque)).